A 79-amino-acid polypeptide reads, in one-letter code: Pyridoxal 5'-phosphate synthase PDX1-like 4 (79 aa).

It belongs to the PdxS/SNZ family.

In Arabidopsis thaliana (Mouse-ear cress), this protein is Pyridoxal 5'-phosphate synthase PDX1-like 4 (PDX1L4).